The sequence spans 353 residues: Probable dual-specificity RNA methyltransferase RlmN (353 aa).

E90 functions as the Proton acceptor in the catalytic mechanism. In terms of domain architecture, Radical SAM core spans Y96–D326. A disulfide bridge links C103 with C331. Residues C110, C114, and C117 each coordinate [4Fe-4S] cluster. Residues G157–E158, S189, S212–H214, and N288 contribute to the S-adenosyl-L-methionine site. C331 acts as the S-methylcysteine intermediate in catalysis.

Belongs to the radical SAM superfamily. RlmN family. [4Fe-4S] cluster is required as a cofactor.

Its subcellular location is the cytoplasm. The catalysed reaction is adenosine(2503) in 23S rRNA + 2 reduced [2Fe-2S]-[ferredoxin] + 2 S-adenosyl-L-methionine = 2-methyladenosine(2503) in 23S rRNA + 5'-deoxyadenosine + L-methionine + 2 oxidized [2Fe-2S]-[ferredoxin] + S-adenosyl-L-homocysteine. It catalyses the reaction adenosine(37) in tRNA + 2 reduced [2Fe-2S]-[ferredoxin] + 2 S-adenosyl-L-methionine = 2-methyladenosine(37) in tRNA + 5'-deoxyadenosine + L-methionine + 2 oxidized [2Fe-2S]-[ferredoxin] + S-adenosyl-L-homocysteine. Functionally, specifically methylates position 2 of adenine 2503 in 23S rRNA and position 2 of adenine 37 in tRNAs. In Clostridium beijerinckii (strain ATCC 51743 / NCIMB 8052) (Clostridium acetobutylicum), this protein is Probable dual-specificity RNA methyltransferase RlmN.